Reading from the N-terminus, the 523-residue chain is Effector protein hopAB1 (523 aa).

Disordered regions lie at residues 1–94 (MPGI…EAQQ), 165–223 (VRQQ…QGLD), and 299–320 (RQTT…SGRR). Residues 18 to 31 (TDGEPVTEREHDSS) are compositionally biased toward basic and acidic residues. Residues 181–194 (SSSGSSQRSLIGRS) are compositionally biased toward low complexity.

Belongs to the HopAB family.

Its subcellular location is the secreted. Its function is as follows. Effector protein that plays different roles depending on the species and plant cultivars that interact with the pathogen. Acts as a virulence determinant by enhancing the development of disease symptoms and bacterial growth. Acts as an avirulence factor by eliciting hypersensitive response (HR) and plant resistance. This chain is Effector protein hopAB1 (hopAB1), found in Pseudomonas savastanoi pv. glycinea (Pseudomonas syringae pv. glycinea).